Here is a 219-residue protein sequence, read N- to C-terminus: Tegument protein UL14 (219 aa).

Residues 161–219 are disordered; it reads ANGPSRIGSHPTYTPTPTGPPGAPAAPLSRTPPSPAPPTGPATDPASASGFARDYPDGE. The segment covering 177-200 has biased composition (pro residues); that stretch reads PTGPPGAPAAPLSRTPPSPAPPTG.

The protein belongs to the alphaherpesvirinae HHV-1 UL14 protein family. In terms of assembly, interacts with UL51. Phosphorylated.

The protein resides in the virion tegument. Its subcellular location is the host cytoplasm. It is found in the host nucleus. In terms of biological role, contributes to the nuclear transport of the viral transcriptional activator VP16 during the early phase of infection. Therefore, participates indirectly in the regulation of the immediate-early gene expression. Additionally, seems to be important for efficient nuclear targeting of capsids. The UL51-UL14 complex regulates final viral envelopment for efficient viral replication. The chain is Tegument protein UL14 from Human herpesvirus 1 (strain 17) (HHV-1).